A 209-amino-acid chain; its full sequence is Small ribosomal subunit protein uS4 (209 aa).

The region spanning 99-159 (SRLDSVCYRM…EKSKAQLRIK (61 aa)) is the S4 RNA-binding domain.

It belongs to the universal ribosomal protein uS4 family. As to quaternary structure, part of the 30S ribosomal subunit. Contacts protein S5. The interaction surface between S4 and S5 is involved in control of translational fidelity.

One of the primary rRNA binding proteins, it binds directly to 16S rRNA where it nucleates assembly of the body of the 30S subunit. In terms of biological role, with S5 and S12 plays an important role in translational accuracy. This chain is Small ribosomal subunit protein uS4, found in Thiobacillus denitrificans (strain ATCC 25259 / T1).